We begin with the raw amino-acid sequence, 124 residues long: U12-barytoxin-Tl1a (124 aa).

A signal peptide spans 1 to 20; it reads MKTMIAWLVLLTFAAALCFA. Residues 21–78 constitute a propeptide that is removed on maturation; the sequence is DEGLKQEHMNERKKSRFREDIPDEISEDLLLQEMEAMEAELLEKEMRMEENRNSREKR. 3 disulfide bridges follow: Cys-79–Cys-99, Cys-86–Cys-104, and Cys-98–Cys-118.

Belongs to the neurotoxin 14 (magi-1) family. 04 (ICK-6) subfamily. As to expression, expressed by the venom gland.

It localises to the secreted. In terms of biological role, ion channel inhibitor. This Trittame loki (Brush-footed trapdoor spider) protein is U12-barytoxin-Tl1a.